We begin with the raw amino-acid sequence, 110 residues long: U1-lycotoxin-Ls1kk (110 aa).

The N-terminal stretch at 1–20 is a signal peptide; that stretch reads MKFVLLFGVLLVTLFSYSSA. Residues 21–44 constitute a propeptide that is removed on maturation; the sequence is EMFDDFDQADEDELLSLIEKEEAR. Intrachain disulfides connect cysteine 47-cysteine 62, cysteine 54-cysteine 71, cysteine 61-cysteine 89, and cysteine 73-cysteine 87.

Belongs to the neurotoxin 19 (CSTX) family. 03 subfamily. In terms of tissue distribution, expressed by the venom gland.

The protein localises to the secreted. This chain is U1-lycotoxin-Ls1kk, found in Lycosa singoriensis (Wolf spider).